The following is a 124-amino-acid chain: Small ribosomal subunit protein uS12 (124 aa).

Residues 1 to 32 (MPTISQLIRHGRQKQKKRTKSPALKSSPQRRG) are disordered. The segment covering 9–20 (RHGRQKQKKRTK) has biased composition (basic residues). Asp-89 bears the 3-methylthioaspartic acid mark.

It belongs to the universal ribosomal protein uS12 family. Part of the 30S ribosomal subunit. Contacts proteins S8 and S17. May interact with IF1 in the 30S initiation complex.

With S4 and S5 plays an important role in translational accuracy. Functionally, interacts with and stabilizes bases of the 16S rRNA that are involved in tRNA selection in the A site and with the mRNA backbone. Located at the interface of the 30S and 50S subunits, it traverses the body of the 30S subunit contacting proteins on the other side and probably holding the rRNA structure together. The combined cluster of proteins S8, S12 and S17 appears to hold together the shoulder and platform of the 30S subunit. This is Small ribosomal subunit protein uS12 from Leptospira borgpetersenii serovar Hardjo-bovis (strain JB197).